The sequence spans 141 residues: Large ribosomal subunit protein uL11 (141 aa).

The protein belongs to the universal ribosomal protein uL11 family. In terms of assembly, part of the ribosomal stalk of the 50S ribosomal subunit. Interacts with L10 and the large rRNA to form the base of the stalk. L10 forms an elongated spine to which L12 dimers bind in a sequential fashion forming a multimeric L10(L12)X complex. One or more lysine residues are methylated.

Forms part of the ribosomal stalk which helps the ribosome interact with GTP-bound translation factors. This Latilactobacillus sakei subsp. sakei (strain 23K) (Lactobacillus sakei subsp. sakei) protein is Large ribosomal subunit protein uL11.